Consider the following 285-residue polypeptide: Formate channel FocA (285 aa).

Over Met1 to His30 the chain is Cytoplasmic. A helical transmembrane segment spans residues Pro31 to Thr56. Topologically, residues Thr57–Phe64 are periplasmic. The chain crosses the membrane as a helical span at residues Gly65–Cys85. Residues Gly86–Lys112 are Cytoplasmic-facing. The helical transmembrane segment at Asn113–Ser135 threads the bilayer. Topologically, residues Gly136 to Thr160 are periplasmic. The chain crosses the membrane as a helical span at residues Phe161–Met181. The Cytoplasmic segment spans residues Ser182–Ser187. A helical membrane pass occupies residues Leu188–Ser205. At Gly206–Asn249 the chain is on the periplasmic side. Residues Phe250–Val276 form a helical membrane-spanning segment. Residues Ile277–His285 lie on the Cytoplasmic side of the membrane.

The protein belongs to the FNT transporter (TC 1.A.16) family. As to quaternary structure, homopentamer.

It localises to the cell inner membrane. The catalysed reaction is formate(in) = formate(out). Its function is as follows. Involved in the bidirectional transport of formate during mixed-acid fermentation. Functions to maintain relatively constant intracellular formate levels during growth, using different mechanisms for efflux and uptake of the anion. Is impermeable to water. This chain is Formate channel FocA, found in Escherichia coli O157:H7.